The sequence spans 681 residues: UvrABC system protein C (681 aa).

The segment at Met1–Ala23 is disordered. The span at Asp14 to Ala23 shows a compositional bias: acidic residues. In terms of domain architecture, GIY-YIG spans Asn67 to Val145. The 36-residue stretch at Gln255–Val290 folds into the UVR domain.

Belongs to the UvrC family. Interacts with UvrB in an incision complex.

It localises to the cytoplasm. Its function is as follows. The UvrABC repair system catalyzes the recognition and processing of DNA lesions. UvrC both incises the 5' and 3' sides of the lesion. The N-terminal half is responsible for the 3' incision and the C-terminal half is responsible for the 5' incision. The protein is UvrABC system protein C of Agrobacterium fabrum (strain C58 / ATCC 33970) (Agrobacterium tumefaciens (strain C58)).